The chain runs to 245 residues: Tetraspanin-6 (245 aa).

Topologically, residues 1–19 are cytoplasmic; it reads MASPSRRLQTKPVITCFKS. Residues 20-40 traverse the membrane as a helical segment; it reads VLLIYTFIFWITGVILLAVGI. The Extracellular segment spans residues 41–59; the sequence is WGKVSLENYFSLLNEKATN. A helical membrane pass occupies residues 60–80; it reads VPFVLIGTGTVIILLGTFGCF. Over 81–93 the chain is Cytoplasmic; it reads ATCRASAWMLKLY. Residues 94-114 traverse the membrane as a helical segment; it reads AMFLTLIFLVELVAAIIGFVF. The Extracellular portion of the chain corresponds to 115 to 208; it reads RHEIKNSLKN…IMVMTIIESE (94 aa). N-linked (GlcNAc...) asparagine glycosylation occurs at Asn134. A helical membrane pass occupies residues 209-229; the sequence is MGVVAGISFGVACFQLIGIFL. The Cytoplasmic portion of the chain corresponds to 230–245; it reads AYCLSRAITNNQYEIV.

Belongs to the tetraspanin (TM4SF) family.

The protein localises to the membrane. This Bos taurus (Bovine) protein is Tetraspanin-6 (TSPAN6).